The chain runs to 402 residues: Endoplasmic reticulum junction formation protein lunapark-B (402 aa).

Residues 1-45 (MGAIISRWKTKPSTVELLESLDKDIKDLEEFRAKNQRLLKLWVGR) lie on the Cytoplasmic side of the membrane. A helical transmembrane segment spans residues 46–66 (LLFYSSALYLLTCLCVYYLYF). Topologically, residues 67–77 (PQQWGARLITA) are lumenal. A helical membrane pass occupies residues 78 to 98 (LPLLAFPALVLLLRKMLIFLF). The Cytoplasmic portion of the chain corresponds to 99-402 (SKRTERNNDK…EEQKKEDESN (304 aa)). Residues 100 to 128 (KRTERNNDKLEDLKTQKRKILEEVMETET) are a coiled coil. Residues 142 to 240 (ESKKKAEAEA…PGPGSGMRPP (99 aa)) are disordered. The segment covering 205 to 222 (SASTPAGASQAETPQQMM) has biased composition (polar residues). The C4-type; plays a role in ER morphology zinc-finger motif lies at 276–301 (CQQCFSHNGMALKEEFEFVAFRCAYC). Positions 311–402 (RPQAPRLPEF…EEQKKEDESN (92 aa)) are disordered. Residues 321 to 330 (SFERRLRSES) show a composition bias toward basic and acidic residues. Positions 341–352 (TPEDSDAPEDDM) are enriched in acidic residues. The segment covering 385 to 402 (PHAEAEALEEQKKEDESN) has biased composition (basic and acidic residues).

It belongs to the lunapark family. In terms of assembly, homodimer; homodimerization requires the C4-type zinc finger motif and decreases during mitosis in a phosphorylation-dependent manner. In terms of processing, phosphorylated. Phosphorylation occurs during interphase. Phosphorylation also occurs during mitosis; these phosphorylations reduce both its homodimerization and the ER three-way tubular junction formation.

It is found in the endoplasmic reticulum membrane. Endoplasmic reticulum (ER)-shaping membrane protein that plays a role in determining ER morphology. Involved in the stabilization of nascent three-way ER tubular junctions within the ER network. May also play a role as a curvature-stabilizing protein within three-way ER tubular junction network. This is Endoplasmic reticulum junction formation protein lunapark-B (lnpkb) from Danio rerio (Zebrafish).